The chain runs to 209 residues: uncharacterized protein (209 aa).

Residues 1–11 show a composition bias toward basic and acidic residues; it reads MMRTNAGKETK. Residues 1 to 20 are disordered; that stretch reads MMRTNAGKETKGYNPAPADS.

This is an uncharacterized protein from Caenorhabditis elegans.